A 124-amino-acid chain; its full sequence is UPF0102 protein Noc_0355 (124 aa).

This sequence belongs to the UPF0102 family.

The polypeptide is UPF0102 protein Noc_0355 (Nitrosococcus oceani (strain ATCC 19707 / BCRC 17464 / JCM 30415 / NCIMB 11848 / C-107)).